Reading from the N-terminus, the 509-residue chain is Aromatase (509 aa).

Position 437 (cysteine 437) interacts with heme.

Belongs to the cytochrome P450 family. Requires heme as cofactor.

It is found in the membrane. The catalysed reaction is testosterone + 3 reduced [NADPH--hemoprotein reductase] + 3 O2 = 17beta-estradiol + formate + 3 oxidized [NADPH--hemoprotein reductase] + 4 H2O + 4 H(+). It carries out the reaction androst-4-ene-3,17-dione + 3 reduced [NADPH--hemoprotein reductase] + 3 O2 = estrone + formate + 3 oxidized [NADPH--hemoprotein reductase] + 4 H2O + 4 H(+). Catalyzes the formation of aromatic C18 estrogens from C19 androgens. This chain is Aromatase (CYP19A1), found in Taeniopygia guttata (Zebra finch).